The primary structure comprises 853 residues: DNA mismatch repair protein MutS (853 aa).

Position 614–621 (614–621 (GPNMGGKS)) interacts with ATP.

This sequence belongs to the DNA mismatch repair MutS family.

Its function is as follows. This protein is involved in the repair of mismatches in DNA. It is possible that it carries out the mismatch recognition step. This protein has a weak ATPase activity. The chain is DNA mismatch repair protein MutS from Escherichia coli O7:K1 (strain IAI39 / ExPEC).